Consider the following 1022-residue polypeptide: ATPase MORC2B (1022 aa).

Ala-2 carries the post-translational modification N-acetylalanine. Residues Asn-39, 87 to 89 (SAK), and 99 to 105 (RYGNGLK) contribute to the ATP site. Mg(2+) is bound at residue Asn-39. Positions 285-362 (KTRAEQEVKK…RDAKQQALKE (78 aa)) form a coiled coil. Lys-427 contributes to the ATP binding site. The CW-type zinc finger occupies 490–544 (AMQVPTTIQCDLCLKWRTLPFQLSAVEEGYPINWVCSMNPDPEQDQCEAFELKQK). Cys-499, Cys-502, Cys-525, and Cys-536 together coordinate Zn(2+). Residues 555–583 (KTQEERQKQLTEKIQQEQRKLKALKKIKP) adopt a coiled-coil conformation. Phosphoserine is present on Ser-615. Lys-649 is covalently cross-linked (Glycyl lysine isopeptide (Lys-Gly) (interchain with G-Cter in SUMO2)). A phosphoserine mark is found at Ser-690, Ser-724, Ser-733, and Ser-737. Lys-758 is covalently cross-linked (Glycyl lysine isopeptide (Lys-Gly) (interchain with G-Cter in SUMO2)). A phosphoserine mark is found at Ser-768 and Ser-770. Thr-827 carries the phosphothreonine modification. Phosphoserine occurs at positions 846 and 851. Lys-922 participates in a covalent cross-link: Glycyl lysine isopeptide (Lys-Gly) (interchain with G-Cter in SUMO2). A coiled-coil region spans residues 962 to 1001 (QAKVSEESLRISQKKLQETEEKLQKLRTNIQTLLQMAQQG).

As to quaternary structure, interacts with Morc2a. In terms of tissue distribution, protein is abundant in testes but not detected in other adult tissues examined (at protein level). Detected in germ cells with a distinct developmental-specific expression pattern but not in somatic cells such as Sertoli cells.

Its subcellular location is the nucleus. The enzyme catalyses ATP + H2O = ADP + phosphate + H(+). In terms of biological role, required for chromosomal synapsis and meiotic recombination in males and females. This is ATPase MORC2B from Mus musculus (Mouse).